A 38-amino-acid chain; its full sequence is Large ribosomal subunit protein bL36 (38 aa).

Belongs to the bacterial ribosomal protein bL36 family.

The polypeptide is Large ribosomal subunit protein bL36 (Stutzerimonas stutzeri (strain A1501) (Pseudomonas stutzeri)).